A 610-amino-acid polypeptide reads, in one-letter code: Lipoprotein LpqB (610 aa).

A signal peptide spans 1 to 27 (MGAEGGGRRRALRLGAYVGCGAVLLTG). C28 carries N-palmitoyl cysteine lipidation. A lipid anchor (S-diacylglycerol cysteine) is attached at C28.

It belongs to the LpqB lipoprotein family.

It localises to the cell membrane. The sequence is that of Lipoprotein LpqB from Streptomyces avermitilis (strain ATCC 31267 / DSM 46492 / JCM 5070 / NBRC 14893 / NCIMB 12804 / NRRL 8165 / MA-4680).